A 431-amino-acid chain; its full sequence is Enolase (431 aa).

Glutamine 167 contacts (2R)-2-phosphoglycerate. Glutamate 209 functions as the Proton donor in the catalytic mechanism. Mg(2+)-binding residues include aspartate 246, glutamate 290, and aspartate 317. 4 residues coordinate (2R)-2-phosphoglycerate: lysine 342, arginine 371, serine 372, and lysine 393. Lysine 342 (proton acceptor) is an active-site residue.

This sequence belongs to the enolase family. As to quaternary structure, component of the RNA degradosome, a multiprotein complex involved in RNA processing and mRNA degradation. It depends on Mg(2+) as a cofactor.

Its subcellular location is the cytoplasm. It is found in the secreted. The protein resides in the cell surface. The enzyme catalyses (2R)-2-phosphoglycerate = phosphoenolpyruvate + H2O. It functions in the pathway carbohydrate degradation; glycolysis; pyruvate from D-glyceraldehyde 3-phosphate: step 4/5. Its function is as follows. Catalyzes the reversible conversion of 2-phosphoglycerate (2-PG) into phosphoenolpyruvate (PEP). It is essential for the degradation of carbohydrates via glycolysis. The polypeptide is Enolase (Erwinia tasmaniensis (strain DSM 17950 / CFBP 7177 / CIP 109463 / NCPPB 4357 / Et1/99)).